Here is a 262-residue protein sequence, read N- to C-terminus: Sulfur carrier protein FdhD (262 aa).

The Cysteine persulfide intermediate role is filled by Cys107.

This sequence belongs to the FdhD family.

Its subcellular location is the cytoplasm. Required for formate dehydrogenase (FDH) activity. Acts as a sulfur carrier protein that transfers sulfur from IscS to the molybdenum cofactor prior to its insertion into FDH. This is Sulfur carrier protein FdhD from Bacillus pumilus (strain SAFR-032).